We begin with the raw amino-acid sequence, 365 residues long: Methionine import ATP-binding protein MetN (365 aa).

Positions 17–256 (IVFEHVTKEF…PQSETTQRFL (240 aa)) constitute an ABC transporter domain. Position 53–60 (53–60 (GHSGAGKS)) interacts with ATP. A disordered region spans residues 346-365 (SNSAAPTTSATVPTPTEEAH).

Belongs to the ABC transporter superfamily. Methionine importer (TC 3.A.1.24) family. The complex is composed of two ATP-binding proteins (MetN), two transmembrane proteins (MetI) and a solute-binding protein (MetQ).

It localises to the cell membrane. The enzyme catalyses L-methionine(out) + ATP + H2O = L-methionine(in) + ADP + phosphate + H(+). It carries out the reaction D-methionine(out) + ATP + H2O = D-methionine(in) + ADP + phosphate + H(+). Functionally, part of the ABC transporter complex MetNIQ involved in methionine import. Responsible for energy coupling to the transport system. The chain is Methionine import ATP-binding protein MetN from Cutibacterium acnes (strain DSM 16379 / KPA171202) (Propionibacterium acnes).